The sequence spans 347 residues: MAIDEDKQKAISLAIKQIDKVFGKGALVRLGDKQVEKIDAISTGSLGLDLALGIGGVPKGRIIEIYGPESSGKTTLSLHIIAECQKNGGVCAFIDAEHALDVHYAKRLGVDTQNLLVSQPDTGEQALEILETITRSGGIDLVVVDSVAALTPKAEIDGDMGDQHVGLQARLMSHALRKITGVLHKMNTTLIFINQIRMKIGMMGYGSPETTTGGNALKFYASVRIDIRRIASLKQNEQHIGNRAKAKVVKNKVAPPFREAEFDIMFGEGISKEGEIIDYGVKLDIVDKSGAWLSYQDKKLGQGRENAKALLKEDKALADEITLKIKESIGSNEEIMPLPDEPLEEME.

An ATP-binding site is contributed by Gly67–Thr74.

It belongs to the RecA family.

The protein resides in the cytoplasm. Can catalyze the hydrolysis of ATP in the presence of single-stranded DNA, the ATP-dependent uptake of single-stranded DNA by duplex DNA, and the ATP-dependent hybridization of homologous single-stranded DNAs. It interacts with LexA causing its activation and leading to its autocatalytic cleavage. The sequence is that of Protein RecA from Helicobacter pylori (strain G27).